The sequence spans 105 residues: UPF0148 protein PH0795 (105 aa).

Belongs to the UPF0148 family.

In Pyrococcus horikoshii (strain ATCC 700860 / DSM 12428 / JCM 9974 / NBRC 100139 / OT-3), this protein is UPF0148 protein PH0795.